The sequence spans 351 residues: Histidinol-phosphate aminotransferase (351 aa).

K215 is subject to N6-(pyridoxal phosphate)lysine.

It belongs to the class-II pyridoxal-phosphate-dependent aminotransferase family. Histidinol-phosphate aminotransferase subfamily. Pyridoxal 5'-phosphate serves as cofactor.

It catalyses the reaction L-histidinol phosphate + 2-oxoglutarate = 3-(imidazol-4-yl)-2-oxopropyl phosphate + L-glutamate. Its pathway is amino-acid biosynthesis; L-histidine biosynthesis; L-histidine from 5-phospho-alpha-D-ribose 1-diphosphate: step 7/9. The sequence is that of Histidinol-phosphate aminotransferase from Methanocorpusculum labreanum (strain ATCC 43576 / DSM 4855 / Z).